Reading from the N-terminus, the 246-residue chain is Biosynthetic peptidoglycan transglycosylase (246 aa).

The chain crosses the membrane as a helical span at residues 27–47 (VVFCFFFAVFALLLIFRFVPI).

This sequence belongs to the glycosyltransferase 51 family.

Its subcellular location is the cell inner membrane. The enzyme catalyses [GlcNAc-(1-&gt;4)-Mur2Ac(oyl-L-Ala-gamma-D-Glu-L-Lys-D-Ala-D-Ala)](n)-di-trans,octa-cis-undecaprenyl diphosphate + beta-D-GlcNAc-(1-&gt;4)-Mur2Ac(oyl-L-Ala-gamma-D-Glu-L-Lys-D-Ala-D-Ala)-di-trans,octa-cis-undecaprenyl diphosphate = [GlcNAc-(1-&gt;4)-Mur2Ac(oyl-L-Ala-gamma-D-Glu-L-Lys-D-Ala-D-Ala)](n+1)-di-trans,octa-cis-undecaprenyl diphosphate + di-trans,octa-cis-undecaprenyl diphosphate + H(+). Its pathway is cell wall biogenesis; peptidoglycan biosynthesis. In terms of biological role, peptidoglycan polymerase that catalyzes glycan chain elongation from lipid-linked precursors. In Haemophilus influenzae (strain ATCC 51907 / DSM 11121 / KW20 / Rd), this protein is Biosynthetic peptidoglycan transglycosylase.